A 589-amino-acid chain; its full sequence is Isocitrate dehydrogenase kinase/phosphatase (589 aa).

ATP-binding positions include 322–328 (APGIRGL) and K343. D378 is a catalytic residue.

It belongs to the AceK family.

It is found in the cytoplasm. It catalyses the reaction L-seryl-[isocitrate dehydrogenase] + ATP = O-phospho-L-seryl-[isocitrate dehydrogenase] + ADP + H(+). Bifunctional enzyme which can phosphorylate or dephosphorylate isocitrate dehydrogenase (IDH) on a specific serine residue. This is a regulatory mechanism which enables bacteria to bypass the Krebs cycle via the glyoxylate shunt in response to the source of carbon. When bacteria are grown on glucose, IDH is fully active and unphosphorylated, but when grown on acetate or ethanol, the activity of IDH declines drastically concomitant with its phosphorylation. This Azoarcus sp. (strain BH72) protein is Isocitrate dehydrogenase kinase/phosphatase.